A 664-amino-acid polypeptide reads, in one-letter code: E3 ubiquitin-protein ligase RNF139 (664 aa).

A2 bears the N-acetylalanine mark. 12 helical membrane-spanning segments follow: residues 51–71 (IVLQIFLRLLGIFVSSIVLIL), 85–105 (AFLLAATSVLVNYYASLHIDF), 125–145 (SLWMALIVLQLTFGIGYVTLL), 154–174 (LIILDLLVPVIGLITELPLHI), 178–198 (LVFTSSLILTLNTVLVLAVKL), 293–313 (GMSAVISSVAHYLGLGILAFI), 323–343 (LGFVAPVLFFILALQTGLSGL), 356–376 (MCLLLTAVLHFIHGMTDPVLM), 390–410 (FPVLFVSACLFILPVLLSYVL), 420–440 (LFAATAFCVELCLKVIVSLTV), 469–489 (SIIVFIFGVVMFGNGAYTMMF), and 495–512 (IRAFMMCLHAYFNIYLQA). The RING-type; atypical zinc finger occupies 547–586 (CAICYHEFTTSARITPCNHYFHALCLRKWLYIQDTCPMCH). Positions 599–610 (SNVSNNNGFTPP) are enriched in polar residues. The disordered stretch occupies residues 599-664 (SNVSNNNGFT…AAEEFNDDTD (66 aa)). Basic and acidic residues predominate over residues 616–628 (EAVREAAAESDRE). Acidic residues predominate over residues 629–639 (LNEDDSTDCDD). S634 is modified (phosphoserine). A phosphothreonine mark is found at T635 and T663.

In terms of assembly, interacts with VHL. Interacts with MHC class I and HM13. Component of SCAP-SREBP complex composed of SREBF2, SCAP and RNF139; the complex hampers the interaction between SCAP and SEC24B, thereby reducing SREBF2 proteolytic processing. Interacts with SREBF2 (via C-terminal domain). Interacts with SCAP; the interaction inhibits the interaction of SCAP with SEC24B and hampering the ER to Golgi transport of the SCAP-SREBP complex. Interacts with SEC24B. Interacts with INSIG1 and INSIG2. Interacts with EIF3F and EIF3H; the interaction leads to protein translation inhibitions in a ubiquitination-dependent manner. Interacts with XBP1; the interaction induces ubiquitination and degradation of XBP1. Interacts with AUP1, AMFR and UBE2G2; interaction with AUP1 facilitates interaction of RNF139 with ubiquitin-conjugating enzyme UBE2G2 and ubiquitin ligase AMFR/gp78, leading to sterol-induced ubiquitination of HMGCR and its subsequent proteasomal degradation. Post-translationally, autoubiquitinated. Ubiquitination is induced by sterol and leads to ist degradation via the ubiquitin-proteasome pathway.

It localises to the endoplasmic reticulum membrane. It catalyses the reaction S-ubiquitinyl-[E2 ubiquitin-conjugating enzyme]-L-cysteine + [acceptor protein]-L-lysine = [E2 ubiquitin-conjugating enzyme]-L-cysteine + N(6)-ubiquitinyl-[acceptor protein]-L-lysine.. It participates in protein modification; protein ubiquitination. E3-ubiquitin ligase; acts as a negative regulator of cell proliferation through mechanisms involving G2/M arrest and cell death. Required for MHC class I ubiquitination in cells expressing the cytomegalovirus protein US2 before dislocation from the endoplasmic reticulum (ER). Affects SREBP processing by hindering the SREBP-SCAP complex translocation from the ER to the Golgi, thereby reducing SREBF2 target gene expression. Involved in the sterol-accelerated degradation of HMGCR. This is achieved through binding to INSIG1 and/or INSIG2 at the ER membrane. In addition, interaction of RNF139 with AUP1 facilitates interaction of RNF139 with ubiquitin-conjugating enzyme UBE2G2 and ubiquitin ligase AMFR, leading to ubiquitination of HMGCR. The ubiquitinated HMGCR is then released from the ER by the complex into the cytosol for subsequent destruction. Required for INSIG1 ubiquitination. May be required for EIF3 complex ubiquitination. The protein is E3 ubiquitin-protein ligase RNF139 (RNF139) of Pongo abelii (Sumatran orangutan).